Consider the following 166-residue polypeptide: Phospholipase A2 inhibitor A1 (166 aa).

The signal sequence occupies residues M1–G19. In terms of domain architecture, C-type lectin spans L46–E161. Disulfide bonds link C83/C160 and C138/C152. An N-linked (GlcNAc...) asparagine glycan is attached at N122.

It belongs to the alpha-type phospholipase A2 inhibitor family. Homotrimer; non-covalently linked. Expressed by the liver.

It is found in the secreted. Functionally, this phospholipase A2 inhibitor binds directly phospholipase A2 in the presence or absence of calcium. In Bothrops neuwiedi (Neuwied's lancehead), this protein is Phospholipase A2 inhibitor A1.